We begin with the raw amino-acid sequence, 181 residues long: Crossover junction endodeoxyribonuclease RuvC (181 aa).

Catalysis depends on residues Asp7, Glu67, and Asp139. Mg(2+) is bound by residues Asp7, Glu67, and Asp139.

It belongs to the RuvC family. As to quaternary structure, homodimer which binds Holliday junction (HJ) DNA. The HJ becomes 2-fold symmetrical on binding to RuvC with unstacked arms; it has a different conformation from HJ DNA in complex with RuvA. In the full resolvosome a probable DNA-RuvA(4)-RuvB(12)-RuvC(2) complex forms which resolves the HJ. It depends on Mg(2+) as a cofactor.

The protein resides in the cytoplasm. It carries out the reaction Endonucleolytic cleavage at a junction such as a reciprocal single-stranded crossover between two homologous DNA duplexes (Holliday junction).. Its function is as follows. The RuvA-RuvB-RuvC complex processes Holliday junction (HJ) DNA during genetic recombination and DNA repair. Endonuclease that resolves HJ intermediates. Cleaves cruciform DNA by making single-stranded nicks across the HJ at symmetrical positions within the homologous arms, yielding a 5'-phosphate and a 3'-hydroxyl group; requires a central core of homology in the junction. The consensus cleavage sequence is 5'-(A/T)TT(C/G)-3'. Cleavage occurs on the 3'-side of the TT dinucleotide at the point of strand exchange. HJ branch migration catalyzed by RuvA-RuvB allows RuvC to scan DNA until it finds its consensus sequence, where it cleaves and resolves the cruciform DNA. This is Crossover junction endodeoxyribonuclease RuvC from Ralstonia nicotianae (strain ATCC BAA-1114 / GMI1000) (Ralstonia solanacearum).